The following is a 376-amino-acid chain: Lipoyl synthase 1, chloroplastic (376 aa).

Residues 1-13 (MIEQSLSKPSFSL) show a composition bias toward polar residues. 2 disordered regions span residues 1–25 (MIEQ…KSKS) and 47–75 (IDAK…DPNV). A chloroplast-targeting transit peptide spans 1–35 (MIEQSLSKPSFSLSIPIPQPPKSKSSFLCSYSKIR). 7 residues coordinate [4Fe-4S] cluster: Cys107, Cys112, Cys118, Cys138, Cys142, Cys145, and Ser353. Residues 121-342 (GGGDGIATAT…KEYGESIGFR (222 aa)) enclose the Radical SAM core domain.

It belongs to the radical SAM superfamily. Lipoyl synthase family. The cofactor is [4Fe-4S] cluster.

Its subcellular location is the plastid. It is found in the chloroplast. The catalysed reaction is [[Fe-S] cluster scaffold protein carrying a second [4Fe-4S](2+) cluster] + N(6)-octanoyl-L-lysyl-[protein] + 2 oxidized [2Fe-2S]-[ferredoxin] + 2 S-adenosyl-L-methionine + 4 H(+) = [[Fe-S] cluster scaffold protein] + N(6)-[(R)-dihydrolipoyl]-L-lysyl-[protein] + 4 Fe(3+) + 2 hydrogen sulfide + 2 5'-deoxyadenosine + 2 L-methionine + 2 reduced [2Fe-2S]-[ferredoxin]. It participates in protein modification; protein lipoylation via endogenous pathway; protein N(6)-(lipoyl)lysine from octanoyl-[acyl-carrier-protein]: step 2/2. Catalyzes the radical-mediated insertion of two sulfur atoms into the C-6 and C-8 positions of the octanoyl moiety bound to the lipoyl domains of lipoate-dependent enzymes, thereby converting the octanoylated domains into lipoylated derivatives. The sequence is that of Lipoyl synthase 1, chloroplastic from Populus trichocarpa (Western balsam poplar).